The following is a 122-amino-acid chain: Large ribosomal subunit protein uL14 (122 aa).

Belongs to the universal ribosomal protein uL14 family. In terms of assembly, part of the 50S ribosomal subunit. Forms a cluster with proteins L3 and L19. In the 70S ribosome, L14 and L19 interact and together make contacts with the 16S rRNA in bridges B5 and B8.

Its function is as follows. Binds to 23S rRNA. Forms part of two intersubunit bridges in the 70S ribosome. The polypeptide is Large ribosomal subunit protein uL14 (Bacillus mycoides (strain KBAB4) (Bacillus weihenstephanensis)).